A 450-amino-acid chain; its full sequence is NADP-specific glutamate dehydrogenase (450 aa).

Residue lysine 111 is part of the active site.

Belongs to the Glu/Leu/Phe/Val dehydrogenases family. In terms of assembly, homohexamer.

The enzyme catalyses L-glutamate + NADP(+) + H2O = 2-oxoglutarate + NH4(+) + NADPH + H(+). The sequence is that of NADP-specific glutamate dehydrogenase (GDHA) from Laccaria bicolor (strain S238N-H82 / ATCC MYA-4686) (Bicoloured deceiver).